The chain runs to 286 residues: ATP synthase gamma chain (286 aa).

This sequence belongs to the ATPase gamma chain family. In terms of assembly, F-type ATPases have 2 components, CF(1) - the catalytic core - and CF(0) - the membrane proton channel. CF(1) has five subunits: alpha(3), beta(3), gamma(1), delta(1), epsilon(1). CF(0) has three main subunits: a, b and c.

Its subcellular location is the cell inner membrane. Functionally, produces ATP from ADP in the presence of a proton gradient across the membrane. The gamma chain is believed to be important in regulating ATPase activity and the flow of protons through the CF(0) complex. The sequence is that of ATP synthase gamma chain from Shewanella woodyi (strain ATCC 51908 / MS32).